Consider the following 428-residue polypeptide: Nucleotidyltransferase MB21D2 (428 aa).

Positions 366–389 are disordered; sequence QRRGSTTSIPSPQSDGGDPNQPDD. A compositionally biased stretch (polar residues) spans 368 to 379; it reads RGSTTSIPSPQS. Threonine 372 carries the post-translational modification Phosphothreonine. Phosphoserine is present on residues serine 373, serine 376, and serine 379.

It belongs to the mab-21 family.

Probable nucleotidyltransferase that catalyzes the formation of cyclic dinucleotide second messenger in response to some unknown stimulus. This is Nucleotidyltransferase MB21D2 from Mus musculus (Mouse).